The following is a 488-amino-acid chain: Proline--tRNA ligase (488 aa).

This sequence belongs to the class-II aminoacyl-tRNA synthetase family. ProS type 3 subfamily. In terms of assembly, homodimer.

Its subcellular location is the cytoplasm. The catalysed reaction is tRNA(Pro) + L-proline + ATP = L-prolyl-tRNA(Pro) + AMP + diphosphate. In terms of biological role, catalyzes the attachment of proline to tRNA(Pro) in a two-step reaction: proline is first activated by ATP to form Pro-AMP and then transferred to the acceptor end of tRNA(Pro). The chain is Proline--tRNA ligase from Borrelia garinii subsp. bavariensis (strain ATCC BAA-2496 / DSM 23469 / PBi) (Borreliella bavariensis).